Reading from the N-terminus, the 301-residue chain is uncharacterized protein (301 aa).

Residues M1–K5 lie on the Extracellular side of the membrane. A helical membrane pass occupies residues F6 to I26. Over L27–R112 the chain is Cytoplasmic. A helical membrane pass occupies residues V113–I133. The Extracellular segment spans residues A134–T143. A helical transmembrane segment spans residues A144–L164. The Cytoplasmic segment spans residues Y165–G191. The helical transmembrane segment at L192–A212 threads the bilayer. Residues T213–S301 are Extracellular-facing. Positions V254 to S301 are disordered. Over residues Q261 to T275 the composition is skewed to basic residues. Positions E282–Y292 are enriched in basic and acidic residues.

Belongs to the SUR7 family.

Its subcellular location is the cell membrane. In terms of biological role, involved in sporulation and affects the sphingolipid composition of the plasma membrane. This is an uncharacterized protein from Saccharomyces cerevisiae (strain ATCC 204508 / S288c) (Baker's yeast).